We begin with the raw amino-acid sequence, 220 residues long: Large ribosomal subunit protein bL25 (220 aa).

This sequence belongs to the bacterial ribosomal protein bL25 family. CTC subfamily. In terms of assembly, part of the 50S ribosomal subunit; part of the 5S rRNA/L5/L18/L25 subcomplex. Contacts the 5S rRNA. Binds to the 5S rRNA independently of L5 and L18.

Its function is as follows. This is one of the proteins that binds to the 5S RNA in the ribosome where it forms part of the central protuberance. The polypeptide is Large ribosomal subunit protein bL25 (Zymomonas mobilis subsp. mobilis (strain ATCC 31821 / ZM4 / CP4)).